Reading from the N-terminus, the 210-residue chain is Small ribosomal subunit protein eS8y (210 aa).

Positions 1-22 (MGISRDSIHKRRATGGKQKMWR) are disordered. A compositionally biased stretch (basic residues) spans 8-22 (IHKRRATGGKQKMWR).

This sequence belongs to the eukaryotic ribosomal protein eS8 family.

The protein is Small ribosomal subunit protein eS8y (RPS8B) of Arabidopsis thaliana (Mouse-ear cress).